The chain runs to 136 residues: Nucleoside diphosphate kinase (136 aa).

The ATP site is built by K10, F58, R86, T92, R104, and N114. H117 (pros-phosphohistidine intermediate) is an active-site residue.

Belongs to the NDK family. Homotetramer. The cofactor is Mg(2+).

The protein resides in the cytoplasm. It carries out the reaction a 2'-deoxyribonucleoside 5'-diphosphate + ATP = a 2'-deoxyribonucleoside 5'-triphosphate + ADP. It catalyses the reaction a ribonucleoside 5'-diphosphate + ATP = a ribonucleoside 5'-triphosphate + ADP. Major role in the synthesis of nucleoside triphosphates other than ATP. The ATP gamma phosphate is transferred to the NDP beta phosphate via a ping-pong mechanism, using a phosphorylated active-site intermediate. The polypeptide is Nucleoside diphosphate kinase (Mycobacterium avium (strain 104)).